A 213-amino-acid polypeptide reads, in one-letter code: 3-demethoxyubiquinol 3-hydroxylase (213 aa).

Fe cation is bound by residues glutamate 62, glutamate 92, histidine 95, glutamate 144, glutamate 176, and histidine 179.

Belongs to the COQ7 family. Requires Fe cation as cofactor.

Its subcellular location is the cell membrane. The catalysed reaction is a 5-methoxy-2-methyl-3-(all-trans-polyprenyl)benzene-1,4-diol + AH2 + O2 = a 3-demethylubiquinol + A + H2O. Its pathway is cofactor biosynthesis; ubiquinone biosynthesis. Catalyzes the hydroxylation of 2-nonaprenyl-3-methyl-6-methoxy-1,4-benzoquinol during ubiquinone biosynthesis. In Psychrobacter sp. (strain PRwf-1), this protein is 3-demethoxyubiquinol 3-hydroxylase.